A 284-amino-acid polypeptide reads, in one-letter code: MEAIKKKMQMLKLDKENALDRAEQAEAEQKQAEERSKQLEDELAAMQKKLKGTEDELDKYSEALKDAQEKLELAEKKAADAEAEVASLNRRIQLVEEELDRAQERLATALQKLEEAEKAADESERGMKVIENRALKDEEKMELQEIQLKEAKHIAEEADRKYEEVARKLVIIEGDLERTEERAELAESKCSELEEELKNVTNNLKSLEAQAEKYSQKEDKYEEEIKILTDKLKEAETRAEFAERSVAKLEKTIDDLEDELYAQKLKYKAISEELDHALNDMTSI.

The residue at position 1 (Met-1) is an N-acetylmethionine. Residues 1-43 (MEAIKKKMQMLKLDKENALDRAEQAEAEQKQAEERSKQLEDEL) are disordered. Positions 1 to 284 (MEAIKKKMQM…DHALNDMTSI (284 aa)) form a coiled coil. Glu-2 bears the N-acetylalanine mark. A compositionally biased stretch (basic and acidic residues) spans 12 to 40 (KLDKENALDRAEQAEAEQKQAEERSKQLE). Thr-53 bears the Phosphothreonine mark. Phosphoserine is present on residues Ser-61 and Ser-87. Thr-108 bears the Phosphothreonine mark. Phosphoserine is present on residues Ser-206 and Ser-215. Leu-228 is subject to N6-acetyllysine. Thr-252 carries the phosphothreonine modification. Position 261 is a phosphotyrosine (Tyr-261). A Phosphoserine modification is found at Ser-271. Thr-282 is subject to Phosphothreonine. At Ser-283 the chain carries Phosphoserine.

The protein belongs to the tropomyosin family. As to quaternary structure, homodimer. Heterodimer of an alpha (TPM1, TPM3 or TPM4) and a beta (TPM2) chain. Interacts with TMOD1. Interacts with TNNT1.

It is found in the cytoplasm. The protein localises to the cytoskeleton. Binds to actin filaments in muscle and non-muscle cells. Plays a central role, in association with the troponin complex, in the calcium dependent regulation of vertebrate striated muscle contraction. Smooth muscle contraction is regulated by interaction with caldesmon. In non-muscle cells is implicated in stabilizing cytoskeleton actin filaments. This is Tropomyosin alpha-3 chain (TPM3) from Bos taurus (Bovine).